A 333-amino-acid chain; its full sequence is Phosphate acyltransferase (333 aa).

The protein belongs to the PlsX family. In terms of assembly, homodimer. Probably interacts with PlsY.

The protein resides in the cytoplasm. The enzyme catalyses a fatty acyl-[ACP] + phosphate = an acyl phosphate + holo-[ACP]. It participates in lipid metabolism; phospholipid metabolism. In terms of biological role, catalyzes the reversible formation of acyl-phosphate (acyl-PO(4)) from acyl-[acyl-carrier-protein] (acyl-ACP). This enzyme utilizes acyl-ACP as fatty acyl donor, but not acyl-CoA. This is Phosphate acyltransferase from Bacillus subtilis (strain 168).